Reading from the N-terminus, the 635-residue chain is Threonine--tRNA ligase (635 aa).

The TGS domain occupies 1–61 (MVSIRLPDGS…DHDVALAIVT (61 aa)). Positions 242 to 533 (DHRKLGKQLD…LIEHHAGAMP (292 aa)) are catalytic. Residues Cys333, His384, and His510 each coordinate Zn(2+).

This sequence belongs to the class-II aminoacyl-tRNA synthetase family. As to quaternary structure, homodimer. Requires Zn(2+) as cofactor.

It is found in the cytoplasm. It catalyses the reaction tRNA(Thr) + L-threonine + ATP = L-threonyl-tRNA(Thr) + AMP + diphosphate + H(+). Functionally, catalyzes the attachment of threonine to tRNA(Thr) in a two-step reaction: L-threonine is first activated by ATP to form Thr-AMP and then transferred to the acceptor end of tRNA(Thr). Also edits incorrectly charged L-seryl-tRNA(Thr). This Paraburkholderia phymatum (strain DSM 17167 / CIP 108236 / LMG 21445 / STM815) (Burkholderia phymatum) protein is Threonine--tRNA ligase.